The sequence spans 234 residues: Large ribosomal subunit protein uL1 (234 aa).

The protein belongs to the universal ribosomal protein uL1 family. Part of the 50S ribosomal subunit.

Its function is as follows. Binds directly to 23S rRNA. The L1 stalk is quite mobile in the ribosome, and is involved in E site tRNA release. Protein L1 is also a translational repressor protein, it controls the translation of the L11 operon by binding to its mRNA. This chain is Large ribosomal subunit protein uL1, found in Bdellovibrio bacteriovorus (strain ATCC 15356 / DSM 50701 / NCIMB 9529 / HD100).